The primary structure comprises 92 residues: Cytochrome c2 (92 aa).

Cys12, Cys15, His16, and Met66 together coordinate heme c.

It belongs to the cytochrome c family. Binds 1 heme c group covalently per subunit.

Functionally, cytochrome c2 is found mainly in purple, non-sulfur, photosynthetic bacteria where it functions as the electron donor to the oxidized bacteriochlorophyll in the photophosphorylation pathway. However, it may also have a role in the respiratory chain and is found in some non-photosynthetic bacteria. This chain is Cytochrome c2, found in Rhodocyclus tenuis (Rhodospirillum tenue).